Reading from the N-terminus, the 351-residue chain is Calcium release-activated calcium channel protein 1 (351 aa).

The span at 1-21 (MSVWTTANNSGLETPTKSPIT) shows a compositional bias: polar residues. Disordered regions lie at residues 1-39 (MSVW…TGNH) and 71-141 (HAHP…EDLH). The Cytoplasmic segment spans residues 1–163 (MSVWTTANNS…SRAKLKASSK (163 aa)). Low complexity-rich tracts occupy residues 22 to 33 (SSVPRAARSSAV) and 80 to 93 (SNSP…SNNS). Residues 94–106 (AGFQRTSISNSLL) show a composition bias toward polar residues. The helical transmembrane segment at 164–181 (TSALLSGFAMVAMVEVQL) threads the bilayer. At 182 to 191 (DHDTNVPPGM) the chain is on the extracellular side. Residues 192-212 (LIAFAICTTLLVAVHMLALMI) form a helical membrane-spanning segment. Over 213-248 (STCILPNIETVCNLHSISLVHESPHERLHWYIETAW) the chain is Cytoplasmic. The helical transmembrane segment at 249–269 (AFSTLLGLILFLLEIAILCWV) threads the bilayer. The Extracellular segment spans residues 270 to 277 (KFYDLSPP). Residues 278–298 (AAWSACVVLIPVMIIFMAFAI) traverse the membrane as a helical segment. Topologically, residues 299–351 (HFYRSLVSHKYEVTVSGIRELEMLKEQMEQDHLEHHNNIRNNGMNYGASGDIV) are cytoplasmic.

It belongs to the Orai family. Hexamer.

It is found in the cell membrane. The catalysed reaction is Ca(2+)(in) = Ca(2+)(out). In terms of biological role, pore-forming subunit of inward rectifying Ca(2+) release-activated Ca(2+) (CRAC) channels. Assembles in hexameric CRAC channels that mediate Ca(2+) influx upon depletion of endoplasmic reticulum Ca(2+) store and channel activation by Ca(2+) sensor Stim, a process known as store-operated Ca(2+) entry (SOCE). Regulates transcription factor NFAT nuclear import. The chain is Calcium release-activated calcium channel protein 1 from Drosophila melanogaster (Fruit fly).